The chain runs to 391 residues: Phosphoglycerate kinase (391 aa).

Residues 21–23 (DLN), arginine 36, 59–62 (HLGR), arginine 113, and arginine 146 each bind substrate. ATP is bound by residues lysine 197, glutamate 319, and 345–348 (GGDT).

It belongs to the phosphoglycerate kinase family. In terms of assembly, monomer.

The protein localises to the cytoplasm. It catalyses the reaction (2R)-3-phosphoglycerate + ATP = (2R)-3-phospho-glyceroyl phosphate + ADP. It functions in the pathway carbohydrate degradation; glycolysis; pyruvate from D-glyceraldehyde 3-phosphate: step 2/5. This Shewanella sp. (strain ANA-3) protein is Phosphoglycerate kinase.